The primary structure comprises 264 residues: NAD-capped RNA hydrolase NudC (264 aa).

The Zn(2+) site is built by cysteine 99 and cysteine 102. Glutamate 112 is a binding site for substrate. Zn(2+)-binding residues include cysteine 117 and cysteine 120. Tyrosine 125 provides a ligand contact to substrate. The Nudix hydrolase domain maps to proline 126–threonine 253. 3 residues coordinate a divalent metal cation: alanine 162, glutamate 178, and glutamate 182. The Nudix box motif lies at glycine 163 to glycine 184. Substrate is bound at residue glutamine 196–serine 203. Glutamate 223 contributes to the a divalent metal cation binding site. Alanine 246 lines the substrate pocket.

This sequence belongs to the Nudix hydrolase family. NudC subfamily. Homodimer. The cofactor is Mg(2+). It depends on Mn(2+) as a cofactor. Zn(2+) serves as cofactor.

The enzyme catalyses a 5'-end NAD(+)-phospho-ribonucleoside in mRNA + H2O = a 5'-end phospho-adenosine-phospho-ribonucleoside in mRNA + beta-nicotinamide D-ribonucleotide + 2 H(+). The catalysed reaction is NAD(+) + H2O = beta-nicotinamide D-ribonucleotide + AMP + 2 H(+). It carries out the reaction NADH + H2O = reduced beta-nicotinamide D-ribonucleotide + AMP + 2 H(+). Functionally, mRNA decapping enzyme that specifically removes the nicotinamide adenine dinucleotide (NAD) cap from a subset of mRNAs by hydrolyzing the diphosphate linkage to produce nicotinamide mononucleotide (NMN) and 5' monophosphate mRNA. The NAD-cap is present at the 5'-end of some mRNAs and stabilizes RNA against 5'-processing. Has preference for mRNAs with a 5'-end purine. Catalyzes the hydrolysis of a broad range of dinucleotide pyrophosphates. In Haemophilus influenzae (strain ATCC 51907 / DSM 11121 / KW20 / Rd), this protein is NAD-capped RNA hydrolase NudC.